A 106-amino-acid chain; its full sequence is Large ribosomal subunit protein bL31B (106 aa).

The disordered stretch occupies residues 85–106; that stretch reads PVQVAEEPVAKGKKKPSLKKKK. Positions 95–106 are enriched in basic residues; the sequence is KGKKKPSLKKKK.

This sequence belongs to the bacterial ribosomal protein bL31 family. Type B subfamily. Part of the 50S ribosomal subunit.

In Chlamydia felis (strain Fe/C-56) (Chlamydophila felis), this protein is Large ribosomal subunit protein bL31B.